Reading from the N-terminus, the 104-residue chain is MSPPPAESHIILLIQQGSDPKTRIWSDHCSLRSAIEYIVGVYQTNQAVSEKESIDVSRFFNFFDEIYDCVPLVYDRHFRAYIPHEKQWLLHHAQEYLTAARQIP.

Belongs to the E(R) family. As to quaternary structure, homodimer. Component of the erh1-mmi1 complex. Interacts with mmi1 (via N-terminus) in a 2:2 stoichiometry.

It localises to the nucleus. Its subcellular location is the cytoplasm. Forms part of the erh1-mmi1 complex that recruits the CCR4-NOT complex and the NURS complex to target RNAs. Suppresses the meiotic program during vegetative growth and promotes the meiotic program during mating. Recruitment of the NURS complex to target mRNAs promotes mRNA decay by engagement of the nuclear exosome, and formation of heterochromatin islands at meiotic genes silenced by the exosome. Recruitment of the CCR4-NOT complex to target RNAs promotes heterochromatin formation at RNAi-dependent heterochromatin domains (HOODs), including a subset of meiotic genes, lncRNAs and retrotransposons. Recruitment of the CCR4-NOT complex to rDNA promotes rDNA heterochromatin assembly. The sequence is that of Enhancer of rudimentary homolog 1 from Schizosaccharomyces pombe (strain 972 / ATCC 24843) (Fission yeast).